A 238-amino-acid polypeptide reads, in one-letter code: Small ribosomal subunit protein eS4 (238 aa).

One can recognise an S4 RNA-binding domain in the interval 38-110 (LPLAIIIRDV…EKKYYALIPI (73 aa)).

Belongs to the eukaryotic ribosomal protein eS4 family.

The chain is Small ribosomal subunit protein eS4 from Pyrobaculum islandicum (strain DSM 4184 / JCM 9189 / GEO3).